The following is a 238-amino-acid chain: 3-deoxy-manno-octulosonate cytidylyltransferase (238 aa).

Belongs to the KdsB family.

The protein resides in the cytoplasm. It carries out the reaction 3-deoxy-alpha-D-manno-oct-2-ulosonate + CTP = CMP-3-deoxy-beta-D-manno-octulosonate + diphosphate. The protein operates within nucleotide-sugar biosynthesis; CMP-3-deoxy-D-manno-octulosonate biosynthesis; CMP-3-deoxy-D-manno-octulosonate from 3-deoxy-D-manno-octulosonate and CTP: step 1/1. Its pathway is bacterial outer membrane biogenesis; lipopolysaccharide biosynthesis. Its function is as follows. Activates KDO (a required 8-carbon sugar) for incorporation into bacterial lipopolysaccharide in Gram-negative bacteria. The sequence is that of 3-deoxy-manno-octulosonate cytidylyltransferase from Nitratiruptor sp. (strain SB155-2).